The chain runs to 208 residues: Small ribosomal subunit protein uS5 (208 aa).

The span at 1–19 (MTDSNNQSPNKKTSGSSGA) shows a compositional bias: polar residues. The disordered stretch occupies residues 1 to 54 (MTDSNNQSPNKKTSGSSGAPTAADGRQENRRSRGEKRGGRRDRRGQERDSEWQE). Composition is skewed to basic and acidic residues over residues 25–37 (GRQE…GEKR) and 44–54 (RGQERDSEWQE). The region spanning 52 to 115 (WQERVVQIRR…ADGKKHLVRV (64 aa)) is the S5 DRBM domain.

It belongs to the universal ribosomal protein uS5 family. In terms of assembly, part of the 30S ribosomal subunit. Contacts proteins S4 and S8.

Its function is as follows. With S4 and S12 plays an important role in translational accuracy. Located at the back of the 30S subunit body where it stabilizes the conformation of the head with respect to the body. This chain is Small ribosomal subunit protein uS5, found in Prochlorococcus marinus (strain NATL1A).